The sequence spans 325 residues: Transcription initiation factor IIB 2 (325 aa).

Residues 1-13 (MSDSTIRTYSSDQ) show a composition bias toward polar residues. The segment at 1–29 (MSDSTIRTYSSDQRQTDNDETVSTPDEDV) is disordered. The segment at 28–58 (DVLTCPECGGQVIDDEEHGESVCVDCGLVVE) adopts a TFIIB-type zinc-finger fold. The Zn(2+) site is built by Cys-32, Cys-35, Cys-50, and Cys-53. The interval 73–93 (STEKDEKSRVGAPTTNMMHDK) is disordered. Repeat copies occupy residues 144 to 227 (GEIE…VREL) and 238 to 319 (QYVP…ELLE).

This sequence belongs to the TFIIB family.

In terms of biological role, stabilizes TBP binding to an archaeal box-A promoter. Also responsible for recruiting RNA polymerase II to the pre-initiation complex (DNA-TBP-TFIIB). In Halobacterium salinarum (strain ATCC 700922 / JCM 11081 / NRC-1) (Halobacterium halobium), this protein is Transcription initiation factor IIB 2.